A 675-amino-acid chain; its full sequence is Zinc finger protein 526 (675 aa).

3 consecutive C2H2-type zinc fingers follow at residues 56–78 (FMCS…QEQH), 108–130 (FQCG…QDAH), and 140–163 (YQCG…KTQH). Residues 160–195 (KTQHLSSAADEPPSPLPPPTPPPPPPPPPPPPPPEV) form a disordered region. Over residues 171–194 (PPSPLPPPTPPPPPPPPPPPPPPE) the composition is skewed to pro residues. The C2H2-type 4 zinc-finger motif lies at 200 to 222 (YECPECSTLCATPEEFLEHQGTH). Residues 225–234 (SLEKEEHNGL) show a composition bias toward basic and acidic residues. Residues 225–283 (SLEKEEHNGLEEEEEDEEEGEEEEDDDDEETDEEEASSELTADDTGSNKSTADSAQSCG) form a disordered region. Residues 235-261 (EEEEEDEEEGEEEEDDDDEETDEEEAS) are compositionally biased toward acidic residues. The segment covering 269 to 281 (TGSNKSTADSAQS) has biased composition (polar residues). C2H2-type zinc fingers lie at residues 312-334 (FHCS…GRAH), 339-361 (HECT…QRLH), 367-389 (YLCV…RRAH), and 395-416 (HRCR…RRTH). The interval 415-439 (THTGKSGTPTRVATVSPAPAEPTPP) is disordered. Polar residues predominate over residues 418–427 (GKSGTPTRVA). 5 consecutive C2H2-type zinc fingers follow at residues 447–470 (LPCP…RAVH), 477–499 (HRCG…LRTH), 505–527 (FQCH…QLTH), 533–555 (YQCL…RRLH), and 578–600 (YYCG…QRVH). Residues 606–625 (LTLQPPRSPSPVPPPPPEPQ) form a disordered region. Residues 611-624 (PRSPSPVPPPPPEP) are compositionally biased toward pro residues.

It belongs to the krueppel C2H2-type zinc-finger protein family.

The protein resides in the nucleus. Its function is as follows. May be involved in transcriptional regulation. The polypeptide is Zinc finger protein 526 (Znf526) (Mus musculus (Mouse)).